We begin with the raw amino-acid sequence, 126 residues long: Desulfoferrodoxin (126 aa).

Fe cation contacts are provided by C10, C13, C29, C30, H49, H69, H75, C116, and H119.

This sequence belongs to the desulfoferrodoxin family. In terms of assembly, homodimer. It depends on Fe(3+) as a cofactor. Cu(2+) serves as cofactor.

It catalyses the reaction reduced [rubredoxin] + superoxide + 2 H(+) = oxidized [rubredoxin] + H2O2. In terms of biological role, catalyzes the one-electron reduction of superoxide anion radical to hydrogen peroxide at a nonheme ferrous iron center. Plays a fundamental role in case of oxidative stress via its superoxide detoxification activity. The sequence is that of Desulfoferrodoxin (dfx) from Nitratidesulfovibrio vulgaris (strain ATCC 29579 / DSM 644 / CCUG 34227 / NCIMB 8303 / VKM B-1760 / Hildenborough) (Desulfovibrio vulgaris).